The following is a 510-amino-acid chain: 2,3-bisphosphoglycerate-independent phosphoglycerate mutase (510 aa).

The Mn(2+) site is built by Asp-15 and Ser-65. Ser-65 functions as the Phosphoserine intermediate in the catalytic mechanism. Residues His-126, 155–156 (RD), Arg-187, Arg-193, 259–262 (RPDR), and Lys-332 each bind substrate. Residues Asp-399, His-403, Asp-440, His-441, and His-458 each contribute to the Mn(2+) site.

Belongs to the BPG-independent phosphoglycerate mutase family. Requires Mn(2+) as cofactor.

The protein localises to the plastid. The protein resides in the chloroplast. The catalysed reaction is (2R)-2-phosphoglycerate = (2R)-3-phosphoglycerate. It participates in carbohydrate degradation; glycolysis; pyruvate from D-glyceraldehyde 3-phosphate: step 3/5. Its function is as follows. Catalyzes the interconversion of 2-phosphoglycerate and 3-phosphoglycerate. The sequence is that of 2,3-bisphosphoglycerate-independent phosphoglycerate mutase from Antithamnion sp. (Red alga).